Here is a 715-residue protein sequence, read N- to C-terminus: uncharacterized protein (715 aa).

Residues 688 to 708 (VWKFNPALYSTITNIFLLIIF) form a helical membrane-spanning segment.

This sequence belongs to the plectrovirus ORF1 family.

It localises to the host membrane. This is an uncharacterized protein from Spiroplasma virus SpV1-R8A2 B (SpV1).